The sequence spans 258 residues: Acetylglutamate kinase (258 aa).

Substrate contacts are provided by residues Gly-44–Gly-45, Arg-66, and Asn-158. ATP contacts are provided by residues Asp-181 to Leu-186 and Ile-209 to Thr-211.

It belongs to the acetylglutamate kinase family. ArgB subfamily. As to quaternary structure, homodimer.

The protein resides in the cytoplasm. It catalyses the reaction N-acetyl-L-glutamate + ATP = N-acetyl-L-glutamyl 5-phosphate + ADP. It participates in amino-acid biosynthesis; L-arginine biosynthesis; N(2)-acetyl-L-ornithine from L-glutamate: step 2/4. Catalyzes the ATP-dependent phosphorylation of N-acetyl-L-glutamate. The sequence is that of Acetylglutamate kinase from Yersinia pestis bv. Antiqua (strain Antiqua).